Here is a 344-residue protein sequence, read N- to C-terminus: Phenylalanine--tRNA ligase alpha subunit (344 aa).

Glu256 lines the Mg(2+) pocket.

The protein belongs to the class-II aminoacyl-tRNA synthetase family. Phe-tRNA synthetase alpha subunit type 1 subfamily. Tetramer of two alpha and two beta subunits. Requires Mg(2+) as cofactor.

Its subcellular location is the cytoplasm. It catalyses the reaction tRNA(Phe) + L-phenylalanine + ATP = L-phenylalanyl-tRNA(Phe) + AMP + diphosphate + H(+). The chain is Phenylalanine--tRNA ligase alpha subunit (pheS) from Bacillus subtilis (strain 168).